Consider the following 202-residue polypeptide: ATP-dependent Clp protease proteolytic subunit (202 aa).

Residue Ser-101 is the Nucleophile of the active site. His-126 is a catalytic residue.

This sequence belongs to the peptidase S14 family. In terms of assembly, component of the chloroplastic Clp protease core complex.

The protein localises to the plastid. It is found in the chloroplast stroma. It catalyses the reaction Hydrolysis of proteins to small peptides in the presence of ATP and magnesium. alpha-casein is the usual test substrate. In the absence of ATP, only oligopeptides shorter than five residues are hydrolyzed (such as succinyl-Leu-Tyr-|-NHMec, and Leu-Tyr-Leu-|-Tyr-Trp, in which cleavage of the -Tyr-|-Leu- and -Tyr-|-Trp bonds also occurs).. Its function is as follows. Cleaves peptides in various proteins in a process that requires ATP hydrolysis. Has a chymotrypsin-like activity. Plays a major role in the degradation of misfolded proteins. The chain is ATP-dependent Clp protease proteolytic subunit from Liriodendron tulipifera (Tuliptree).